A 357-amino-acid chain; its full sequence is tRNA-specific 2-thiouridylase MnmA (357 aa).

ATP contacts are provided by residues 6–13 (AMSGGVDS) and Leu32. Residue Cys101 is the Nucleophile of the active site. A disulfide bridge links Cys101 with Cys193. Gly125 serves as a coordination point for ATP. The tract at residues 143–145 (KDQ) is interaction with tRNA. Residue Cys193 is the Cysteine persulfide intermediate of the active site.

This sequence belongs to the MnmA/TRMU family.

It localises to the cytoplasm. It catalyses the reaction S-sulfanyl-L-cysteinyl-[protein] + uridine(34) in tRNA + AH2 + ATP = 2-thiouridine(34) in tRNA + L-cysteinyl-[protein] + A + AMP + diphosphate + H(+). In terms of biological role, catalyzes the 2-thiolation of uridine at the wobble position (U34) of tRNA, leading to the formation of s(2)U34. The chain is tRNA-specific 2-thiouridylase MnmA from Mycolicibacterium vanbaalenii (strain DSM 7251 / JCM 13017 / BCRC 16820 / KCTC 9966 / NRRL B-24157 / PYR-1) (Mycobacterium vanbaalenii).